Consider the following 370-residue polypeptide: Selenide, water dikinase 2 (370 aa).

Residue U24 is part of the active site. A non-standard amino acid (selenocysteine) is located at residue U24. ATP-binding positions include K27, 55–57 (GMD), D76, and D99. Residue D57 coordinates Mg(2+). Positions 99 and 258 each coordinate Mg(2+).

This sequence belongs to the selenophosphate synthase 1 family. Class I subfamily. In terms of assembly, homodimer. The cofactor is Mg(2+). As to expression, first expressed in the midgut anlagen with subsequent expression in a variety of tissues including the gut and nervous system.

The enzyme catalyses hydrogenselenide + ATP + H2O = selenophosphate + AMP + phosphate + 2 H(+). Synthesizes selenophosphate from selenide and ATP. The chain is Selenide, water dikinase 2 (Sps2) from Drosophila melanogaster (Fruit fly).